A 493-amino-acid polypeptide reads, in one-letter code: Glutamyl-tRNA(Gln) amidotransferase subunit A (493 aa).

Active-site charge relay system residues include lysine 79 and serine 159. The active-site Acyl-ester intermediate is the serine 183.

This sequence belongs to the amidase family. GatA subfamily. In terms of assembly, heterotrimer of A, B and C subunits.

It carries out the reaction L-glutamyl-tRNA(Gln) + L-glutamine + ATP + H2O = L-glutaminyl-tRNA(Gln) + L-glutamate + ADP + phosphate + H(+). Functionally, allows the formation of correctly charged Gln-tRNA(Gln) through the transamidation of misacylated Glu-tRNA(Gln) in organisms which lack glutaminyl-tRNA synthetase. The reaction takes place in the presence of glutamine and ATP through an activated gamma-phospho-Glu-tRNA(Gln). The chain is Glutamyl-tRNA(Gln) amidotransferase subunit A from Brucella suis biovar 1 (strain 1330).